Reading from the N-terminus, the 386-residue chain is HORMA domain-containing protein 1 (386 aa).

The HORMA domain maps to 24-224; it reads TQSLILVKRL…TPFHVLKVKV (201 aa). 2 disordered regions span residues 237–274 and 289–386; these read SIFK…KRDD and EDGN…TPLN. The segment covering 289–313 has biased composition (polar residues); sequence EDGNLQSDDSQNSALADSQEKTSQA. Over residues 329-343 the composition is skewed to basic and acidic residues; sequence QKPDLELKNQKESAR.

The protein localises to the nucleus. The protein resides in the chromosome. In terms of biological role, plays a key role in meiotic progression by ensuring that sufficient numbers of processed DNA double-strand breaks (DSBs) are available for successful homology search, promoting synaptonemal-complex formation independently and playing key role in the male mid-pachytene checkpoint and the female meiotic prophase checkpoint. The polypeptide is HORMA domain-containing protein 1 (hormad1) (Xenopus laevis (African clawed frog)).